The sequence spans 455 residues: Outer capsid protein sigma-1 (455 aa).

Residues 1–307 form a tail region; the sequence is MDPRLREEVV…YPIADVSGGI (307 aa). Positions 116 to 148 form a coiled coil; that stretch reads LAELRVDHDNLVARVDTAERNIGSLTTELSTLT. Residues asparagine 231, asparagine 264, and asparagine 282 are each glycosylated (N-linked (GlcNAc...) asparagine; by host). Residues 308-455 form a head region; that stretch reads GMSPNYRFRQ…MTVSYPRSFT (148 aa).

It belongs to the orthoreovirus sigma-1 protein family. Homotrimer. Interacts (via the head region) with human F11R. Post-translationally, undergoes dramatic conformational rearrangements during viral disassembly in the endocytic pathway.

It localises to the virion. Fiber-like molecule that attaches the virion to the host cell membrane by binding to the primary receptor F11R/JAM-A and to sialic acid containing proteins (coreceptor). The interaction of sigma-1 with F11R is required for NF-kB activation and apoptosis. Binding to both sialic acid and F11R is required to induce maximal levels of apoptosis. The protein is Outer capsid protein sigma-1 (S1) of Reovirus type 3 (strain Dearing) (T3D).